Consider the following 471-residue polypeptide: Collagenase 3 (471 aa).

An N-terminal signal peptide occupies residues 1-19; the sequence is MQPGVLAACLLLSWTHCWS. Residues 20–103 constitute a propeptide, activation peptide; the sequence is LPLLNSNEDD…PRCGVPDVGE (84 aa). The Cysteine switch signature appears at 94-101; the sequence is PRCGVPDV. C96 contributes to the Zn(2+) binding site. N-linked (GlcNAc...) asparagine glycosylation occurs at N117. A Ca(2+)-binding site is contributed by D128. Residues N152 and N158 are each glycosylated (N-linked (GlcNAc...) asparagine). D162 provides a ligand contact to Ca(2+). Residues H172 and D174 each coordinate Zn(2+). Residues 176-246 are interaction with TIMP2; sequence YPFDGPSGLL…GALMFPIYTY (71 aa). 4 residues coordinate Ca(2+): D179, G180, S182, and L184. Position 187 (H187) interacts with Zn(2+). N194, G196, and D198 together coordinate Ca(2+). Position 200 (H200) interacts with Zn(2+). Ca(2+) is bound by residues D202, D203, and E205. A Zn(2+)-binding site is contributed by H222. Residue E223 is part of the active site. Positions 226, 232, and 240 each coordinate Zn(2+). The interval 263-284 is disordered; sequence QSLYGPGDEDPNPKHPKTPDKC. Positions 268–471 are interaction with collagen; the sequence is PGDEDPNPKH…VMPTNSLLWC (204 aa). Residues 273 to 284 are compositionally biased toward basic and acidic residues; sequence PNPKHPKTPDKC. Hemopexin repeat units follow at residues 281–330, 331–377, 379–427, and 428–471; these read PDKC…WPEL, PNRI…GFPR, VKKI…FPGI, and GGKV…LLWC. A disulfide bridge links C284 with C471. Ca(2+) contacts are provided by D291, I293, D335, and A337. Phosphotyrosine; by PKDCC is present on Y366. The Ca(2+) site is built by S383 and A385. An N-linked (GlcNAc...) asparagine glycan is attached at N409. Ca(2+)-binding residues include D432 and V434.

Belongs to the peptidase M10A family. The cofactor is Ca(2+). Requires Zn(2+) as cofactor. In terms of processing, the proenzyme is activated by removal of the propeptide; this cleavage can be effected by other matrix metalloproteinases, such as MMP2, MMP3 and MMP14 and may involve several cleavage steps. Cleavage can also be autocatalytic, after partial maturation by another protease or after treatment with 4-aminophenylmercuric acetate (APMA) (in vitro). Post-translationally, N-glycosylated. Tyrosine phosphorylated by PKDCC/VLK.

It is found in the secreted. Its subcellular location is the extracellular space. The protein resides in the extracellular matrix. Functionally, plays a role in the degradation of extracellular matrix proteins including fibrillar collagen, fibronectin, TNC and ACAN. Cleaves triple helical collagens, including type I, type II and type III collagen, but has the highest activity with soluble type II collagen. Can also degrade collagen type IV, type XIV and type X. May also function by activating or degrading key regulatory proteins, such as TGFB1 and CCN2. Plays a role in wound healing, tissue remodeling, cartilage degradation, bone development, bone mineralization and ossification. Required for normal embryonic bone development and ossification. Plays a role in the healing of bone fractures via endochondral ossification. Plays a role in wound healing, probably by a mechanism that involves proteolytic activation of TGFB1 and degradation of CCN2. Plays a role in keratinocyte migration during wound healing. May play a role in cell migration and in tumor cell invasion. The polypeptide is Collagenase 3 (MMP13) (Oryctolagus cuniculus (Rabbit)).